The following is a 485-amino-acid chain: MTNKIRVRYAPSPTGLLHIGNARTALFNYLYARHHGGDFIIRIEDTDRKRHVEDGERSQLENLRWLGMDWDESPETHENYRQSERLALYKKYIDQLLAEGKAYKSYVTEEELAAERERQEAAGETPRYINEFLGMSADEKAAYIAKRQAAGIVPTVRLKVNEAGIYKWHDMVKGDIEFEGGNIGGDWVIQKKDGYPTYNFAVVVDDHDMQISHVIRGDDHIANTPKQLMVYEALGWEAPAFAHMTLIINSETGKKLSKRDTNTLQFIEDYRQKGYLPEAVFNFIALLGWNPGGENEIFSRQELIELFDENRLSKSPAAFDQKKLDWMNNEYIKNADFDTIFALAKPYLESAGRLTDKAKKLVELYQPQMKSIDEIVPLTDLFFEEFPELSEEEKEFMAGETVPIVLQAFKAKLEAMSDEDFKSENIFPQIKAVQKETGIKGKNLFMPIRIAVSGEMHGPELPDTIFLLGKEKSIQHLEDMLEKLK.

The 'HIGH' region signature appears at 11 to 21; that stretch reads PSPTGLLHIGN. Residues 255–259 carry the 'KMSKS' region motif; it reads KLSKR. Lysine 258 contributes to the ATP binding site.

Belongs to the class-I aminoacyl-tRNA synthetase family. Glutamate--tRNA ligase type 1 subfamily. Monomer.

It is found in the cytoplasm. It catalyses the reaction tRNA(Glu) + L-glutamate + ATP = L-glutamyl-tRNA(Glu) + AMP + diphosphate. Functionally, catalyzes the attachment of glutamate to tRNA(Glu) in a two-step reaction: glutamate is first activated by ATP to form Glu-AMP and then transferred to the acceptor end of tRNA(Glu). The sequence is that of Glutamate--tRNA ligase from Streptococcus mutans serotype c (strain ATCC 700610 / UA159).